The chain runs to 642 residues: Threonine--tRNA ligase (642 aa).

One can recognise a TGS domain in the interval 1-58 (MQVAGKELEVQQGALCGEVLKEALSKKQFKNVVVAKCGDTLLDLTTTVPADCTDLEPV). The interval 239–530 (DHRKLGTQLD…LLEHTGGALP (292 aa)) is catalytic. Zn(2+) is bound by residues Cys331, His382, and His507.

The protein belongs to the class-II aminoacyl-tRNA synthetase family. In terms of assembly, homodimer. The cofactor is Zn(2+).

It localises to the cytoplasm. It catalyses the reaction tRNA(Thr) + L-threonine + ATP = L-threonyl-tRNA(Thr) + AMP + diphosphate + H(+). In terms of biological role, catalyzes the attachment of threonine to tRNA(Thr) in a two-step reaction: L-threonine is first activated by ATP to form Thr-AMP and then transferred to the acceptor end of tRNA(Thr). Also edits incorrectly charged L-seryl-tRNA(Thr). In Maridesulfovibrio salexigens (strain ATCC 14822 / DSM 2638 / NCIMB 8403 / VKM B-1763) (Desulfovibrio salexigens), this protein is Threonine--tRNA ligase.